The primary structure comprises 251 residues: tRNA pseudouridine synthase A (251 aa).

Residue Asp54 is the Nucleophile of the active site. Tyr111 is a substrate binding site.

This sequence belongs to the tRNA pseudouridine synthase TruA family. As to quaternary structure, homodimer.

It carries out the reaction uridine(38/39/40) in tRNA = pseudouridine(38/39/40) in tRNA. Functionally, formation of pseudouridine at positions 38, 39 and 40 in the anticodon stem and loop of transfer RNAs. In Mycoplasma mycoides subsp. mycoides SC (strain CCUG 32753 / NCTC 10114 / PG1), this protein is tRNA pseudouridine synthase A.